The following is a 468-amino-acid chain: MRLYNTLTRKKEEFHPIDEKEVKMYSCGPTVYNYFHIGNARPFIIFDTLRRYLEYKGYNVKFVQNFTDIDDKMIKRANEEGITVKELADKFINEYFVDAKGLGIKEATVHPRATENIDAIIEMIKKLEEKGFAYNVDGDVYFSARKFTEYGKLSHQSLEDLELGARIDVDERKKDPMDFALWKAQKPGEPAWDSPWGKGRPGWHIECSAMANKYLGETIDIHSGGQDLVFPHHENEIAQSEAANGKPFARFWLHNGFINVDGEKMAKSKGNFFTVRDIAKTFDYEVIRFFMLSAHYRSPINFSAELLEQAKNGLERIYNCLDNLEYLKEHAQAEKITDSERELQNRLLGIKAKFIEAMDDDINTADAIAAIFDIVKEVNTNINATSNSSKEIIDFSLSLIKELGGVLGIAQKSRQKVLDKEIEELIERRQKARKEKDWKTADEIRDKLKEMGIILEDTPQGVKWTIQR.

Cys-27 is a binding site for Zn(2+). The 'HIGH' region signature appears at 29 to 39 (PTVYNYFHIGN). Positions 207, 232, and 236 each coordinate Zn(2+). The short motif at 264–268 (KMAKS) is the 'KMSKS' region element. Position 267 (Lys-267) interacts with ATP.

It belongs to the class-I aminoacyl-tRNA synthetase family. As to quaternary structure, monomer. It depends on Zn(2+) as a cofactor.

Its subcellular location is the cytoplasm. It carries out the reaction tRNA(Cys) + L-cysteine + ATP = L-cysteinyl-tRNA(Cys) + AMP + diphosphate. The sequence is that of Cysteine--tRNA ligase from Acetivibrio thermocellus (strain ATCC 27405 / DSM 1237 / JCM 9322 / NBRC 103400 / NCIMB 10682 / NRRL B-4536 / VPI 7372) (Clostridium thermocellum).